Consider the following 283-residue polypeptide: Phosphatidylserine decarboxylase proenzyme (283 aa).

Active-site charge relay system; for autoendoproteolytic cleavage activity residues include Asp-90, His-143, and Ser-248. Ser-248 (schiff-base intermediate with substrate; via pyruvic acid; for decarboxylase activity) is an active-site residue. Ser-248 is subject to Pyruvic acid (Ser); by autocatalysis.

The protein belongs to the phosphatidylserine decarboxylase family. PSD-B subfamily. Prokaryotic type I sub-subfamily. As to quaternary structure, heterodimer of a large membrane-associated beta subunit and a small pyruvoyl-containing alpha subunit. It depends on pyruvate as a cofactor. Post-translationally, is synthesized initially as an inactive proenzyme. Formation of the active enzyme involves a self-maturation process in which the active site pyruvoyl group is generated from an internal serine residue via an autocatalytic post-translational modification. Two non-identical subunits are generated from the proenzyme in this reaction, and the pyruvate is formed at the N-terminus of the alpha chain, which is derived from the carboxyl end of the proenzyme. The autoendoproteolytic cleavage occurs by a canonical serine protease mechanism, in which the side chain hydroxyl group of the serine supplies its oxygen atom to form the C-terminus of the beta chain, while the remainder of the serine residue undergoes an oxidative deamination to produce ammonia and the pyruvoyl prosthetic group on the alpha chain. During this reaction, the Ser that is part of the protease active site of the proenzyme becomes the pyruvoyl prosthetic group, which constitutes an essential element of the active site of the mature decarboxylase.

Its subcellular location is the cell membrane. It carries out the reaction a 1,2-diacyl-sn-glycero-3-phospho-L-serine + H(+) = a 1,2-diacyl-sn-glycero-3-phosphoethanolamine + CO2. Its pathway is phospholipid metabolism; phosphatidylethanolamine biosynthesis; phosphatidylethanolamine from CDP-diacylglycerol: step 2/2. Catalyzes the formation of phosphatidylethanolamine (PtdEtn) from phosphatidylserine (PtdSer). This is Phosphatidylserine decarboxylase proenzyme from Francisella tularensis subsp. novicida (strain U112).